The chain runs to 479 residues: Kynurenine 3-monooxygenase (479 aa).

Residues Val-19, 37–40 (YEAR), and Ala-57 contribute to the FAD site. L-kynurenine-binding residues include Arg-85 and Tyr-99. FAD contacts are provided by residues Arg-111, Leu-136, Thr-172, Asp-304, and 317–318 (MN). Positions 363 and 398 each coordinate L-kynurenine. Helical transmembrane passes span 385–404 (FLHAIMPSTFIPLYTMVAFT) and 425–445 (GLFVLGSLIAIGGTYLLVHHL).

The protein belongs to the aromatic-ring hydroxylase family. KMO subfamily. FAD serves as cofactor. In terms of tissue distribution, expressed by organs containing secondary lymphoid tissue, such as the lung, spleen, mesenteric lymph node, thymus and peripheral lymph nodes.

Its subcellular location is the mitochondrion outer membrane. It carries out the reaction L-kynurenine + NADPH + O2 + H(+) = 3-hydroxy-L-kynurenine + NADP(+) + H2O. It functions in the pathway cofactor biosynthesis; NAD(+) biosynthesis; quinolinate from L-kynurenine: step 1/3. Its function is as follows. Catalyzes the hydroxylation of L-kynurenine (L-Kyn) to form 3-hydroxy-L-kynurenine (L-3OHKyn). Required for synthesis of quinolinic acid, a neurotoxic NMDA receptor antagonist and potential endogenous inhibitor of NMDA receptor signaling in axonal targeting, synaptogenesis and apoptosis during brain development. Quinolinic acid may also affect NMDA receptor signaling in pancreatic beta cells, osteoblasts, myocardial cells, and the gastrointestinal tract. The chain is Kynurenine 3-monooxygenase from Mus musculus (Mouse).